Reading from the N-terminus, the 322-residue chain is tRNA-dihydrouridine(16) synthase (322 aa).

FMN contacts are provided by residues 8 to 10 (PME) and Gln-69. Residue Cys-99 is the Proton donor of the active site. FMN contacts are provided by residues Lys-140, 200-202 (NGD), and 224-225 (GR).

Belongs to the Dus family. DusC subfamily. It depends on FMN as a cofactor.

It carries out the reaction 5,6-dihydrouridine(16) in tRNA + NADP(+) = uridine(16) in tRNA + NADPH + H(+). It catalyses the reaction 5,6-dihydrouridine(16) in tRNA + NAD(+) = uridine(16) in tRNA + NADH + H(+). Its function is as follows. Catalyzes the synthesis of 5,6-dihydrouridine (D), a modified base found in the D-loop of most tRNAs, via the reduction of the C5-C6 double bond in target uridines. Specifically modifies U16 in tRNAs. The sequence is that of tRNA-dihydrouridine(16) synthase from Cupriavidus necator (strain ATCC 17699 / DSM 428 / KCTC 22496 / NCIMB 10442 / H16 / Stanier 337) (Ralstonia eutropha).